A 166-amino-acid chain; its full sequence is Regulatory protein RecX (166 aa).

It belongs to the RecX family.

The protein resides in the cytoplasm. Modulates RecA activity. The chain is Regulatory protein RecX from Klebsiella pneumoniae (strain 342).